We begin with the raw amino-acid sequence, 250 residues long: Ubiquinone/menaquinone biosynthesis C-methyltransferase UbiE (250 aa).

S-adenosyl-L-methionine-binding positions include T74, D94, 122–123 (DA), and S139.

The protein belongs to the class I-like SAM-binding methyltransferase superfamily. MenG/UbiE family.

It catalyses the reaction a 2-demethylmenaquinol + S-adenosyl-L-methionine = a menaquinol + S-adenosyl-L-homocysteine + H(+). The enzyme catalyses a 2-methoxy-6-(all-trans-polyprenyl)benzene-1,4-diol + S-adenosyl-L-methionine = a 5-methoxy-2-methyl-3-(all-trans-polyprenyl)benzene-1,4-diol + S-adenosyl-L-homocysteine + H(+). Its pathway is quinol/quinone metabolism; menaquinone biosynthesis; menaquinol from 1,4-dihydroxy-2-naphthoate: step 2/2. The protein operates within cofactor biosynthesis; ubiquinone biosynthesis. Its function is as follows. Methyltransferase required for the conversion of demethylmenaquinol (DMKH2) to menaquinol (MKH2) and the conversion of 2-polyprenyl-6-methoxy-1,4-benzoquinol (DDMQH2) to 2-polyprenyl-3-methyl-6-methoxy-1,4-benzoquinol (DMQH2). This is Ubiquinone/menaquinone biosynthesis C-methyltransferase UbiE from Dinoroseobacter shibae (strain DSM 16493 / NCIMB 14021 / DFL 12).